A 251-amino-acid chain; its full sequence is Imidazole glycerol phosphate synthase subunit HisF (251 aa).

Residues aspartate 11 and aspartate 130 contribute to the active site.

The protein belongs to the HisA/HisF family. In terms of assembly, heterodimer of HisH and HisF.

It is found in the cytoplasm. The enzyme catalyses 5-[(5-phospho-1-deoxy-D-ribulos-1-ylimino)methylamino]-1-(5-phospho-beta-D-ribosyl)imidazole-4-carboxamide + L-glutamine = D-erythro-1-(imidazol-4-yl)glycerol 3-phosphate + 5-amino-1-(5-phospho-beta-D-ribosyl)imidazole-4-carboxamide + L-glutamate + H(+). It participates in amino-acid biosynthesis; L-histidine biosynthesis; L-histidine from 5-phospho-alpha-D-ribose 1-diphosphate: step 5/9. In terms of biological role, IGPS catalyzes the conversion of PRFAR and glutamine to IGP, AICAR and glutamate. The HisF subunit catalyzes the cyclization activity that produces IGP and AICAR from PRFAR using the ammonia provided by the HisH subunit. In Parabacteroides distasonis (strain ATCC 8503 / DSM 20701 / CIP 104284 / JCM 5825 / NCTC 11152), this protein is Imidazole glycerol phosphate synthase subunit HisF.